Here is an 859-residue protein sequence, read N- to C-terminus: DNA mismatch repair protein MutS (859 aa).

622 to 629 (GPNMGGKS) serves as a coordination point for ATP.

Belongs to the DNA mismatch repair MutS family.

This protein is involved in the repair of mismatches in DNA. It is possible that it carries out the mismatch recognition step. This protein has a weak ATPase activity. The sequence is that of DNA mismatch repair protein MutS from Coxiella burnetii (strain Dugway 5J108-111).